We begin with the raw amino-acid sequence, 1557 residues long: Ras guanine nucleotide exchange factor K (1557 aa).

The span at 1–16 (MEPTINPPVNLPPPVP) shows a compositional bias: pro residues. 6 disordered regions span residues 1–121 (MEPT…SYTV), 146–181 (VETL…KLSV), 195–238 (LYQQ…SPQL), 283–347 (SPLP…GLTP), 558–619 (NNNN…DELS), and 881–937 (TNNN…QVNH). Low complexity-rich tracts occupy residues 17–40 (SRSN…NNTN), 52–63 (SSPSSPSSPSPS), 73–90 (NNNN…NGNV), 102–114 (ISSP…HTSS), 148–161 (TLSS…KTTT), 195–207 (LYQQ…NPNS), and 222–236 (PPSS…STSP). Residues 283–310 (SPLPPPPLTIPNKVPPLPMRLPPPPPPQ) show a composition bias toward pro residues. Coiled-coil stretches lie at residues 310-338 (QQLD…SNST) and 591-629 (NNNN…EEEL). Low complexity predominate over residues 311 to 333 (QLDQMYSNNNQQQQQQQQQQQNN). The segment covering 334–343 (ESNSTTTSEG) has biased composition (polar residues). 2 stretches are compositionally biased toward low complexity: residues 558–610 (NNNN…NNNN) and 881–928 (TNNN…TPTT). In terms of domain architecture, N-terminal Ras-GEF spans 1058–1177 (LNAEIDAATL…QIRNCILKRT (120 aa)). Residues 1254 to 1303 (PSISQNTPSSPSLIPSSPRPITSSSSVSSSTLLKSPLSQQAKSRIPETKT) form a disordered region. The segment covering 1261–1291 (PSSPSLIPSSPRPITSSSSVSSSTLLKSPLS) has biased composition (low complexity). The Ras-GEF domain occupies 1316–1549 (DDEEIARQLT…YHLSLLKEPR (234 aa)).

Its function is as follows. Promotes the exchange of Ras-bound GDP by GTP. The polypeptide is Ras guanine nucleotide exchange factor K (gefK) (Dictyostelium discoideum (Social amoeba)).